The primary structure comprises 539 residues: Membrane protein insertase YidC (539 aa).

Residues 6-26 form a helical membrane-spanning segment; that stretch reads VILAVALSFAVLLGWQFLFPP. The disordered stretch occupies residues 28-63; it reads PQQPAPAQQEQTAQPNQAVDSSVAGPVSNQLPDPAS. A compositionally biased stretch (low complexity) spans 32 to 45; that stretch reads APAQQEQTAQPNQA. Residues 54-63 are compositionally biased toward polar residues; the sequence is VSNQLPDPAS. Transmembrane regions (helical) follow at residues 349-369, 421-441, and 496-516; these read YGIA…PLSH, MLLQ…TVAL, and IMMF…SGLV.

Belongs to the OXA1/ALB3/YidC family. Type 1 subfamily. In terms of assembly, interacts with the Sec translocase complex via SecD. Specifically interacts with transmembrane segments of nascent integral membrane proteins during membrane integration.

It is found in the cell inner membrane. Required for the insertion and/or proper folding and/or complex formation of integral membrane proteins into the membrane. Involved in integration of membrane proteins that insert both dependently and independently of the Sec translocase complex, as well as at least some lipoproteins. Aids folding of multispanning membrane proteins. The sequence is that of Membrane protein insertase YidC from Maridesulfovibrio salexigens (strain ATCC 14822 / DSM 2638 / NCIMB 8403 / VKM B-1763) (Desulfovibrio salexigens).